The following is a 114-amino-acid chain: Lymphotactin (114 aa).

The first 21 residues, 1 to 21 (MRLLLLTFLGVCCLTPWVVEG), serve as a signal peptide directing secretion. An intrachain disulfide couples C32 to C69. Residues 92-114 (KNMAETVPTGAQRSTSTAITLTG) are disordered. Residues 100–114 (TGAQRSTSTAITLTG) show a composition bias toward polar residues.

This sequence belongs to the intercrine gamma family. As to expression, expressed in activated CD8(+) T cells. In the thymus, expressed by medullary thymic epithelial cells.

It is found in the secreted. Functionally, chemotactic activity for lymphocytes but not for monocytes or neutrophils. In thymus, mediates medullary accumulation of thymic dendritic cells and contributes to regulatoy T cell development, playing a role in self-tolerance establishment. In Mus musculus (Mouse), this protein is Lymphotactin (Xcl1).